The primary structure comprises 1021 residues: Immunoglobulin superfamily member 2 (1021 aa).

The first 20 residues, 1–20, serve as a signal peptide directing secretion; the sequence is MAGISYVASFFLLLTKLSIG. At 21-954 the chain is on the extracellular side; sequence QREVTVQKGP…LPSRICSSAP (934 aa). 7 Ig-like C2-type domains span residues 22-139, 144-265, 279-389, 408-525, 541-651, 656-794, and 808-925; these read REVT…AKTN, PDTL…WMFI, PAVK…RTGS, PAAR…RDLS, LQVS…NSLY, PRAS…WHKL, and PTGS…KWIN. 2 cysteine pairs are disulfide-bonded: Cys43/Cys121 and Cys168/Cys249. Asn44 carries N-linked (GlcNAc...) asparagine glycosylation. The EWI motif signature appears at 253 to 255; sequence EWI. Intrachain disulfides connect Cys304/Cys377, Cys434/Cys511, Cys562/Cys640, Cys697/Cys778, and Cys834/Cys909. N-linked (GlcNAc...) asparagine glycosylation occurs at Asn322. A helical transmembrane segment spans residues 955–975; sequence LLYFLFICPFVLLLLLLISLL. Over 976–1021 the chain is Cytoplasmic; sequence CLYWKARKLSTLRSNTRKEKALWVDLKEAGGVTTNRREDEEEDEGN.

Post-translationally, N-glycosylated. In terms of tissue distribution, expressed in lung, thymus and small intestine. Detected in cutaneous dendritic cells, activated T-cells, monocytes and granulocytes as well as with epithelial cells with dendritic morphology. Expressed in some leukemic cells, the CD4(+) CD56(+) blastic tumor cells, as well as in Langerhans cells from LCH (Langerhans cell histiocytosis) patients.

Its subcellular location is the membrane. Its function is as follows. Plays a role as inhibitor of T-cells proliferation induced by CD3. Inhibits expression of IL2RA on activated T-cells and secretion of IL2. Inhibits tyrosine kinases that are required for IL2 production and cellular proliferation. Inhibits phospholipase C-gamma-1/PLCG1 phosphorylation and subsequent CD3-induced changes in intracellular free calcium. Prevents nuclear translocation of nuclear factor of activated T-cell to the nucleus. Plays a role in the inhibition of T-cell proliferation via IL10 secretion by cutaneous dendritic cells. May be a marker of CD4(+) CD56(+) leukemic tumor cells. The polypeptide is Immunoglobulin superfamily member 2 (CD101) (Homo sapiens (Human)).